Reading from the N-terminus, the 395-residue chain is GPI-anchor transamidase (395 aa).

A signal peptide spans 1-27; it reads MAVTDSLSRAASTLAAVLLLSFGSVAA. Over 28 to 368 the chain is Lumenal; sequence SHIEDQAEQF…PKLKDWHPPG (341 aa). Asp-79, Ile-82, Glu-118, and Asp-120 together coordinate Ca(2+). His-164 functions as the Proton donor in the catalytic mechanism. The active-site Nucleophile; acyl-thioester intermediate is the Cys-206. A protein is bound by residues Cys-206, Ser-232, and Ser-234. Residues 231-236 are autoinhibitory loop; it reads DSLSHQ. Cys-275 and Cys-280 are disulfide-bonded. Residues 369-385 form a helical membrane-spanning segment; sequence GFILGLWALIIMVFFKT. Residues 386 to 395 are Cytoplasmic-facing; it reads YGIKHMKFIF.

Belongs to the peptidase C13 family. In terms of assembly, heteropentamer. Part of the GPI-anchor transamidase complex, consisting of PIGK, PIGT, PIGS, PIGU and GAA1. Interacts with GPAA1. Interacts with PIGT; this interaction, via a disulfide link, stabilizes the expression of GAA1 and PIGK and links them to PIGS. The disulfide bond between PIGK/GPI8 and PIGT is important for normal enzyme activity.

The protein resides in the endoplasmic reticulum membrane. It functions in the pathway glycolipid biosynthesis; glycosylphosphatidylinositol-anchor biosynthesis. Its activity is regulated as follows. In the absence of proproteins substrates, exists in an inactive state with a disrupted catalytic site by an autoinhibitory loop. The binding of proprotein substrates, particularly the CSP region, to GPI-T triggers concerted conformational changes that alleviate the inhibition by the autoinhibitory loop. Meanwhile, proprotein residues near the omega- site induce the formation of a catalytic cleft for catalysis, following which the products are released and GPI-T reverts to the inactive state. Functionally, catalytic subunit of the glycosylphosphatidylinositol-anchor (GPI-anchor) transamidase (GPI-T) complex that catalyzes the formation of the linkage between a proprotein and a GPI-anchor and participates in GPI anchored protein biosynthesis. Recognizes diverse proproteins at a C-terminal signal peptide (CSP) region that lacks consensus sequence and replaces it with a GPI-anchor via a transamidation reaction. Transamidation catalysis reaction follows a two-phase mechanism. In the acyl-enzyme phase, the carbonyl group of the proproteins's omega-site undergoes a nucleophilic attack forming an enzyme-substrate thioester bond. Followed by a general acid catalysis that allows CSP releasing, regenerating the carbonyl, and forming the acyl-enzyme intermediate. In the GPI-anchor attachment phase, the amino group of the GPI-anchor's ethanolamine phosphate, the one on third mannose (EtNP3), mediates a nucleophilic attack on the carbonyl of the acyl-enzyme intermediate, replacing the CSP, allowing GPI-anchor attachment to the omega-residue, therefore forming the product and freeing the enzyme. The sequence is that of GPI-anchor transamidase from Pongo abelii (Sumatran orangutan).